The chain runs to 151 residues: Ribosome-binding factor A (151 aa).

The disordered stretch occupies residues 116 to 151 (DAEVARAAANARPAGDPDPYREPRPADDDDEDDEDE). The segment covering 120 to 129 (ARAAANARPA) has biased composition (low complexity). Acidic residues predominate over residues 142-151 (DDDDEDDEDE).

This sequence belongs to the RbfA family. In terms of assembly, monomer. Binds 30S ribosomal subunits, but not 50S ribosomal subunits or 70S ribosomes.

The protein localises to the cytoplasm. Its function is as follows. One of several proteins that assist in the late maturation steps of the functional core of the 30S ribosomal subunit. Associates with free 30S ribosomal subunits (but not with 30S subunits that are part of 70S ribosomes or polysomes). Required for efficient processing of 16S rRNA. May interact with the 5'-terminal helix region of 16S rRNA. The sequence is that of Ribosome-binding factor A from Thermobifida fusca (strain YX).